The sequence spans 607 residues: Pyruvate decarboxylase 2 (607 aa).

The interval 1–22 (MDTKIGSIDACNPTNHDIGGPP) is disordered. The substrate site is built by aspartate 69 and histidine 156. The interval 434–516 (DSWFNCQKLK…FLINNGGYTI (83 aa)) is thiamine pyrophosphate binding. Residues aspartate 484, asparagine 511, and glycine 513 each coordinate Mg(2+). Position 517 (glutamate 517) interacts with substrate.

Belongs to the TPP enzyme family. As to quaternary structure, homotetramer. The cofactor is a metal cation. It depends on thiamine diphosphate as a cofactor. As to expression, expressed at low levels in roots, shoots, flowers, siliques and seeds.

It carries out the reaction a 2-oxocarboxylate + H(+) = an aldehyde + CO2. This is Pyruvate decarboxylase 2 (PDC2) from Arabidopsis thaliana (Mouse-ear cress).